Reading from the N-terminus, the 349-residue chain is Phenylalanine--tRNA ligase alpha subunit (349 aa).

Residue glutamate 262 participates in Mg(2+) binding.

Belongs to the class-II aminoacyl-tRNA synthetase family. Phe-tRNA synthetase alpha subunit type 1 subfamily. As to quaternary structure, tetramer of two alpha and two beta subunits. Mg(2+) serves as cofactor.

Its subcellular location is the cytoplasm. The enzyme catalyses tRNA(Phe) + L-phenylalanine + ATP = L-phenylalanyl-tRNA(Phe) + AMP + diphosphate + H(+). This Sorangium cellulosum (strain So ce56) (Polyangium cellulosum (strain So ce56)) protein is Phenylalanine--tRNA ligase alpha subunit.